A 138-amino-acid chain; its full sequence is Transcription antitermination protein NusB (138 aa).

It belongs to the NusB family.

Its function is as follows. Involved in transcription antitermination. Required for transcription of ribosomal RNA (rRNA) genes. Binds specifically to the boxA antiterminator sequence of the ribosomal RNA (rrn) operons. This chain is Transcription antitermination protein NusB, found in Helicobacter acinonychis (strain Sheeba).